The primary structure comprises 185 residues: Large ribosomal subunit protein uL5 (185 aa).

Belongs to the universal ribosomal protein uL5 family. As to quaternary structure, part of the 50S ribosomal subunit; part of the 5S rRNA/L5/L18/L25 subcomplex. Contacts the 5S rRNA and the P site tRNA. Forms a bridge to the 30S subunit in the 70S ribosome.

In terms of biological role, this is one of the proteins that bind and probably mediate the attachment of the 5S RNA into the large ribosomal subunit, where it forms part of the central protuberance. In the 70S ribosome it contacts protein S13 of the 30S subunit (bridge B1b), connecting the 2 subunits; this bridge is implicated in subunit movement. Contacts the P site tRNA; the 5S rRNA and some of its associated proteins might help stabilize positioning of ribosome-bound tRNAs. In Parabacteroides distasonis (strain ATCC 8503 / DSM 20701 / CIP 104284 / JCM 5825 / NCTC 11152), this protein is Large ribosomal subunit protein uL5.